We begin with the raw amino-acid sequence, 499 residues long: MKAEFVRILPHMFNLFLAVFPEIFIINATFILLIHGVVFSTSKKYDYPPLASNVGWLGLLSVLITLLLLAAGAPLLTIAHLFWNNLFRRDNFTYFCQIFLLLSTAGTISMCFDFFDQERFDAFEFIVLILLSTCGMLFMISAYDLIAMYLAIELQSLCFYVIAASKRKSEFSTEAGLKYLILGAFSSGILLFPCSMIYGSTGATHFDQLAKILTGYEITGARSSGIFMGILFIAVGFLFKITAVPFHMWAPDIYEGSPTPVTAFLSIAPKISIFANILRVFIYGSYGATLQQIFFFCSIASMILGALAAMAQTKVKRLLAYSSIGHVGYICIGFSCGTIEGIQSLLIGIFIYALMTMDAFAIVLALRQTRVKYIADLGALAKTNPILAITFSITMFSYAGIPPLAGFCSKFYLFFAALGCGAYFLALVGVVTSVIGCFYYIRLVKRMFFDTPRTWILYEPMDRNKSLLLAMTSFFITLFLLYPSPLFSVTHQMALSLYL.

Transmembrane regions (helical) follow at residues 15 to 35 (LFLAVFPEIFIINATFILLIH), 56 to 76 (WLGLLSVLITLLLLAAGAPLL), 95 to 115 (FCQIFLLLSTAGTISMCFDFF), 122 to 142 (AFEFIVLILLSTCGMLFMISA), 145 to 165 (LIAMYLAIELQSLCFYVIAAS), 179 to 199 (YLILGAFSSGILLFPCSMIYG), 226 to 246 (IFMGILFIAVGFLFKITAVPF), 263 to 283 (AFLSIAPKISIFANILRVFIY), 293 to 313 (IFFFCSIASMILGALAAMAQT), 319 to 339 (LAYSSIGHVGYICIGFSCGTI), 345 to 365 (LLIGIFIYALMTMDAFAIVLA), 386 to 406 (ILAITFSITMFSYAGIPPLAG), 411 to 431 (FYLFFAALGCGAYFLALVGVV), and 467 to 487 (LLLAMTSFFITLFLLYPSPLF).

Complex I is composed of at least 49 different subunits.

The protein resides in the mitochondrion inner membrane. It catalyses the reaction a ubiquinone + NADH + 5 H(+)(in) = a ubiquinol + NAD(+) + 4 H(+)(out). Core subunit of the mitochondrial membrane respiratory chain NADH dehydrogenase (Complex I) that is believed to belong to the minimal assembly required for catalysis. Complex I functions in the transfer of electrons from NADH to the respiratory chain. The immediate electron acceptor for the enzyme is believed to be ubiquinone. The sequence is that of NADH-ubiquinone oxidoreductase chain 2 (ND2) from Arabidopsis thaliana (Mouse-ear cress).